A 739-amino-acid chain; its full sequence is Homeobox protein SIX5 (739 aa).

3 stretches are compositionally biased toward low complexity: residues 1-24 (MATLPAEPSAGPAAGGEAVAAAAA), 34-61 (QLLQTLQAAEGEAAAAAGAGAGAAAAGA), and 74-83 (PEAASEPPTG). 4 disordered regions span residues 1 to 84 (MATL…PTGL), 251 to 294 (NRRQ…AAPV), 361 to 381 (LTGGGGAPPPQPSPQGASETK), and 617 to 650 (LSAQQPPPAAATTSSTSLPFSPDSPGLLPNFPAP). The homeobox DNA-binding region spans 201-260 (GEETVYCFKERSRAALKACYRGNRYPTPDEKRRLATLTGLSLTQVSNWFKNRRQRDRTGA). A compositionally biased stretch (basic and acidic residues) spans 279 to 289 (ESSRSPEDLER). A compositionally biased stretch (low complexity) spans 617–646 (LSAQQPPPAAATTSSTSLPFSPDSPGLLPN).

The protein belongs to the SIX/Sine oculis homeobox family. As to quaternary structure, probably binds DNA dimer. Interacts with EYA3, and probably EYA1 and EYA2. In terms of tissue distribution, expressed in adult but not in fetal eyes. Found in corneal epithelium and endothelium, lens epithelium, ciliary body epithelia, cellular layers of the retina and the sclera.

It localises to the cytoplasm. The protein localises to the nucleus. Functionally, transcription factor that is thought to be involved in regulation of organogenesis. May be involved in determination and maintenance of retina formation. Binds a 5'-GGTGTCAG-3' motif present in the ARE regulatory element of ATP1A1. Binds a 5'-TCA[AG][AG]TTNC-3' motif present in the MEF3 element in the myogenin promoter, and in the IGFBP5 promoter. Thought to be regulated by association with Dach and Eya proteins, and seems to be coactivated by EYA1, EYA2 and EYA3. The protein is Homeobox protein SIX5 (SIX5) of Homo sapiens (Human).